The following is a 988-amino-acid chain: Mediator of RNA polymerase II transcription subunit 24 (988 aa).

6 consecutive short sequence motifs (LXXLL motif) follow at residues Leu128 to Leu132, Leu341 to Leu345, Leu445 to Leu449, Leu555 to Leu559, Leu786 to Leu790, and Leu856 to Leu860.

This sequence belongs to the Mediator complex subunit 24 family. As to quaternary structure, component of the Mediator complex.

It is found in the nucleus. Its function is as follows. Component of the Mediator complex, a coactivator involved in the regulated transcription of nearly all RNA polymerase II-dependent genes. Mediator functions as a bridge to convey information from gene-specific regulatory proteins to the basal RNA polymerase II transcription machinery. Mediator is recruited to promoters by direct interactions with regulatory proteins and serves as a scaffold for the assembly of a functional preinitiation complex with RNA polymerase II and the general transcription factors. This is Mediator of RNA polymerase II transcription subunit 24 (med24) from Xenopus laevis (African clawed frog).